A 572-amino-acid polypeptide reads, in one-letter code: Proline--tRNA ligase (572 aa).

The protein belongs to the class-II aminoacyl-tRNA synthetase family. ProS type 1 subfamily. In terms of assembly, homodimer.

The protein resides in the cytoplasm. It catalyses the reaction tRNA(Pro) + L-proline + ATP = L-prolyl-tRNA(Pro) + AMP + diphosphate. Catalyzes the attachment of proline to tRNA(Pro) in a two-step reaction: proline is first activated by ATP to form Pro-AMP and then transferred to the acceptor end of tRNA(Pro). As ProRS can inadvertently accommodate and process non-cognate amino acids such as alanine and cysteine, to avoid such errors it has two additional distinct editing activities against alanine. One activity is designated as 'pretransfer' editing and involves the tRNA(Pro)-independent hydrolysis of activated Ala-AMP. The other activity is designated 'posttransfer' editing and involves deacylation of mischarged Ala-tRNA(Pro). The misacylated Cys-tRNA(Pro) is not edited by ProRS. This chain is Proline--tRNA ligase, found in Pectobacterium carotovorum subsp. carotovorum (strain PC1).